The chain runs to 231 residues: 4-hydroxy-tetrahydrodipicolinate reductase (231 aa).

NAD(+) is bound by residues D33, 68-70 (CTT), and 92-95 (SSNT). H124 (proton donor/acceptor) is an active-site residue. Position 125 (H125) interacts with (S)-2,3,4,5-tetrahydrodipicolinate. K128 functions as the Proton donor in the catalytic mechanism. 134-135 (GT) lines the (S)-2,3,4,5-tetrahydrodipicolinate pocket.

Belongs to the DapB family.

It localises to the cytoplasm. The catalysed reaction is (S)-2,3,4,5-tetrahydrodipicolinate + NAD(+) + H2O = (2S,4S)-4-hydroxy-2,3,4,5-tetrahydrodipicolinate + NADH + H(+). It carries out the reaction (S)-2,3,4,5-tetrahydrodipicolinate + NADP(+) + H2O = (2S,4S)-4-hydroxy-2,3,4,5-tetrahydrodipicolinate + NADPH + H(+). Its pathway is amino-acid biosynthesis; L-lysine biosynthesis via DAP pathway; (S)-tetrahydrodipicolinate from L-aspartate: step 4/4. Functionally, catalyzes the conversion of 4-hydroxy-tetrahydrodipicolinate (HTPA) to tetrahydrodipicolinate. The sequence is that of 4-hydroxy-tetrahydrodipicolinate reductase from Brachyspira hyodysenteriae (strain ATCC 49526 / WA1).